A 59-amino-acid polypeptide reads, in one-letter code: Cortexin domain-containing 1 protein (59 aa).

A helical transmembrane segment spans residues 17-37; sequence LTLACFVFLCLFLVVMIIRCA.

The protein resides in the membrane. The polypeptide is Cortexin domain-containing 1 protein (Homo sapiens (Human)).